Reading from the N-terminus, the 1588-residue chain is RB1-inducible coiled-coil protein 1 (1588 aa).

Phosphoserine is present on residues Ser222, Ser229, and Ser237. Thr238 carries the post-translational modification Phosphothreonine. A phosphoserine mark is found at Ser243, Ser253, Ser257, and Ser261. The Nuclear localization signal signature appears at 565-568; that stretch reads KPRK. 8 positions are modified to phosphoserine: Ser623, Ser646, Ser649, Ser652, Ser733, Ser1087, Ser1366, and Ser1478. Residues 638-674 are disordered; it reads QKVSTSQASPQSAASPRIESTTGITTTTSPKTPPPLT. Residues 643–667 are compositionally biased toward low complexity; it reads SQASPQSAASPRIESTTGITTTTSP. The FFAT signature appears at 730 to 736; it reads DFMSAVN. 2 coiled-coil regions span residues 858–1393 and 1440–1479; these read LKEK…TSSF and SVQENMLSEEKQRIMLLERTLQLKEEENKRLNQRLMSQSL.

As to quaternary structure, part of a complex containing ATG13/KIAA0652, ULK1 and RB1CC1. This complex associates with ATG101. Interacts with PTK2/FAK1 and PTK2B/PYK2. Interacts with GABARAP and GABARAPL1. Interacts with ATG16L1; the interaction is required for ULK1 complex-dependent autophagy. Interacts with RNF111, SKI and SMAD7. Interacts with COP1 in the cytoplasm of proliferating cells in response to UV stimulation. Interacts with TP53. Interacts with C9orf72. Interacts with WDR45B. Interacts with ATG13; this interaction is increased in the absence of TMEM39A. Interacts with WIPI2. Interacts with TAX1BP1. Interacts (via phosphorylated FFAT motif) with MOSPD2. In terms of processing, phosphorylation at Ser-733 of the FFAT motif activates interaction with MOSPD2. In terms of tissue distribution, expressed abundantly in heart and testis, and moderately in kidney, liver and skeletal muscles. Very low expression levels in lung and spleen. Colocalizes with RB1 in various tissues.

Its subcellular location is the nucleus. The protein resides in the cytoplasm. It is found in the cytosol. It localises to the preautophagosomal structure. The protein localises to the lysosome. Functionally, involved in autophagy. Regulates early events but also late events of autophagosome formation through direct interaction with Atg16L1. Required for the formation of the autophagosome-like double-membrane structure that surrounds the Salmonella-containing vacuole (SCV) during S.typhimurium infection and subsequent xenophagy. Involved in repair of DNA damage caused by ionizing radiation, which subsequently improves cell survival by decreasing apoptosis. Inhibits PTK2/FAK1 and PTK2B/PYK2 kinase activity, affecting their downstream signaling pathways. Plays a role as a modulator of TGF-beta-signaling by restricting substrate specificity of RNF111. Functions as a DNA-binding transcription factor. Is a potent regulator of the RB1 pathway through induction of RB1 expression. Plays a crucial role in muscular differentiation. Plays an indispensable role in fetal hematopoiesis and in the regulation of neuronal homeostasis. This chain is RB1-inducible coiled-coil protein 1, found in Mus musculus (Mouse).